Here is a 247-residue protein sequence, read N- to C-terminus: NAD-dependent protein deacetylase (247 aa).

Positions 1 to 247 (MDTRKNLKEL…LGGIVEELGY (247 aa)) constitute a Deacetylase sirtuin-type domain. Positions 23, 27, 34, 35, 104, 106, 107, and 122 each coordinate NAD(+). Phe34 is a binding site for nicotinamide. The nicotinamide site is built by Ile106 and Asp107. His122 acts as the Proton acceptor in catalysis. Zn(2+) contacts are provided by Cys130, Cys133, Cys152, and Cys155. NAD(+) contacts are provided by Thr193, Ser194, Asn216, and Ile234.

It belongs to the sirtuin family. Class U subfamily. Zn(2+) is required as a cofactor.

Its subcellular location is the cytoplasm. It catalyses the reaction N(6)-acetyl-L-lysyl-[protein] + NAD(+) + H2O = 2''-O-acetyl-ADP-D-ribose + nicotinamide + L-lysyl-[protein]. NAD-dependent protein deacetylase which modulates the activities of several enzymes which are inactive in their acetylated form. The polypeptide is NAD-dependent protein deacetylase (Clostridium tetani (strain Massachusetts / E88)).